Consider the following 412-residue polypeptide: Sulfhydrogenase 2 subunit alpha (412 aa).

Ni(2+) is bound by residues Cys60, Cys63, Cys402, and Cys405. Cys63 lines the Fe cation pocket. Residue Cys405 coordinates Fe cation.

It belongs to the [NiFe]/[NiFeSe] hydrogenase large subunit family. In terms of assembly, dimer of heterotetramer of alpha, beta, gamma and delta subunits. The nickel-containing alpha and delta subunits constitute the hydrogenase activity. The beta and gamma subunits (flavin-containing dimer) constitute the sulfur reductase activity. It depends on Ni(2+) as a cofactor. Fe cation serves as cofactor.

It is found in the cytoplasm. The catalysed reaction is H2 + NADP(+) = NADPH + H(+). The enzyme catalyses H2 + NAD(+) = NADH + H(+). Functionally, part of a bifunctional enzyme complex that functions as a hydrogen-evolving hydrogenase with sulfur-reducing activity. May play a role in hydrogen cycling during fermentative growth. Activity exhibited with NAD in addition to NADPH. The alpha and delta subunits form the hydrogenase component that catalyzes the reduction of protons to evolve hydrogen. The polypeptide is Sulfhydrogenase 2 subunit alpha (Pyrococcus furiosus (strain ATCC 43587 / DSM 3638 / JCM 8422 / Vc1)).